A 1188-amino-acid chain; its full sequence is AT-rich interactive domain-containing protein 5B (1188 aa).

A Glycyl lysine isopeptide (Lys-Gly) (interchain with G-Cter in SUMO2) cross-link involves residue Lys-130. The tract at residues 251-277 is disordered; sequence RPRKKKPCPQRRDSFSGVKDSNNNSDG. The residue at position 264 (Ser-264) is a Phosphoserine. One can recognise an ARID domain in the interval 318 to 410; that stretch reads RADEQAFLVA…LILPYERFIK (93 aa). Lys-336 bears the N6,N6-dimethyllysine mark. The disordered stretch occupies residues 412 to 611; sequence EEDKPLPPIK…QPPLANQNET (200 aa). Residue Lys-445 forms a Glycyl lysine isopeptide (Lys-Gly) (interchain with G-Cter in SUMO2) linkage. Positions 446 to 458 are enriched in basic and acidic residues; sequence HEIPKSKKEKENA. Residues Lys-494 and Lys-496 each participate in a glycyl lysine isopeptide (Lys-Gly) (interchain with G-Cter in SUMO2) cross-link. A compositionally biased stretch (polar residues) spans 597–609; that stretch reads SFPTTQPPLANQN. Glycyl lysine isopeptide (Lys-Gly) (interchain with G-Cter in SUMO2) cross-links involve residues Lys-767, Lys-774, Lys-803, and Lys-810. Disordered stretches follow at residues 846 to 874 and 891 to 918; these read HHLHNEQTSKYPSRDMYRESENSSFPSHR and DKKSAAAEAPTDDQPTDLSLPKNPHKPT. A compositionally biased stretch (basic and acidic residues) spans 847-866; the sequence is HLHNEQTSKYPSRDMYRESE. Glycyl lysine isopeptide (Lys-Gly) (interchain with G-Cter in SUMO2) cross-links involve residues Lys-893, Lys-916, Lys-920, and Lys-935. A disordered region spans residues 956–978; it reads RVSPMTMSGPKKYPESLSRSGKP. Glycyl lysine isopeptide (Lys-Gly) (interchain with G-Cter in SUMO2) cross-links involve residues Lys-988, Lys-1000, and Lys-1013. A disordered region spans residues 1028-1070; that stretch reads ARAVSPLDPSKEVSGKEKASEQESEGSKAAHGGHSGGGSEGHK. A Phosphoserine modification is found at Ser-1032. Residues 1036 to 1055 are compositionally biased toward basic and acidic residues; sequence PSKEVSGKEKASEQESEGSK. Residues Lys-1055 and Lys-1070 each participate in a glycyl lysine isopeptide (Lys-Gly) (interchain with G-Cter in SUMO2) cross-link. Phosphoserine is present on Ser-1133.

It belongs to the ARID5B family. Methylation at Lys-336 prevents DNA-binding. Demethylation by PHF2 promotes recruitment of the PHF2-ARID5B complex to promoters. As to expression, widely expressed, including in liver (at protein level).

It localises to the nucleus. Its function is as follows. Transcription coactivator that binds to the 5'-AATA[CT]-3' core sequence and plays a key role in adipogenesis and liver development. Acts by forming a complex with phosphorylated PHF2, which mediates demethylation at Lys-336, leading to target the PHF2-ARID5B complex to target promoters, where PHF2 mediates demethylation of dimethylated 'Lys-9' of histone H3 (H3K9me2), followed by transcription activation of target genes. The PHF2-ARID5B complex acts as a coactivator of HNF4A in liver. Required for adipogenesis: regulates triglyceride metabolism in adipocytes by regulating expression of adipogenic genes. Overexpression leads to induction of smooth muscle marker genes, suggesting that it may also act as a regulator of smooth muscle cell differentiation and proliferation. Represses the cytomegalovirus enhancer. In Homo sapiens (Human), this protein is AT-rich interactive domain-containing protein 5B (ARID5B).